We begin with the raw amino-acid sequence, 1142 residues long: Potassium channel subfamily T member 2 (1142 aa).

At 1 to 63 (MVDLESEVPP…KNQRSSLRIR (63 aa)) the chain is on the cytoplasmic side. A helical membrane pass occupies residues 64-84 (LFNFSLKLLSCLLYIIRVLLE). Residues 85 to 101 (KPSQGNDWSHIFWVNRS) are Extracellular-facing. N-linked (GlcNAc...) asparagine glycosylation is present at Asn99. The chain crosses the membrane as a helical span at residues 102 to 122 (LPLWGLQVSVALISLFETILL). The Cytoplasmic segment spans residues 123-137 (GYLSYKGNIWEQILR). Residues 138-158 (VPFILEIINAVPFIISIFWPT) form a helical membrane-spanning segment. Residues 159–160 (LR) lie on the Extracellular side of the membrane. A helical membrane pass occupies residues 161-173 (NLFVPVFLNCWLA). Residues 174-198 (KHALENMINDLHRAIQRTQSAMFNQ) are Cytoplasmic-facing. The chain crosses the membrane as a helical span at residues 199 to 219 (VLILISTLLCLIFTCICGIQH). Over 220 to 228 (LERIGKKLN) the chain is Extracellular. Positions 229–249 (LFDSLYFCIVTFSTVGFGDVT) form an intramembrane region, pore-forming. Residues 250-256 (PETWSSK) lie on the Extracellular side of the membrane. The helical transmembrane segment at 257–277 (LFVVAMICVALVVLPIQFEQL) threads the bilayer. At 278-1142 (AYLWMERQKS…VQDSREETQL (865 aa)) the chain is on the cytoplasmic side. RCK N-terminal domains are found at residues 299–435 (EKHV…DHVV) and 725–865 (NKLI…CYSL). Disordered stretches follow at residues 989–1044 (DTKD…EKIT) and 1118–1142 (PNSE…ETQL). Basic residues predominate over residues 1017 to 1037 (LRRKSMQWARRLSRKGPKHSG). Residues 1118–1129 (PNSEPSRKNSIC) show a composition bias toward polar residues.

Belongs to the potassium channel family. Calcium-activated (TC 1.A.1.3) subfamily. KCa4.2/KCNT2 sub-subfamily. Homotetramer. Forms heteromer with KCNT1; heteromeric channels differ from those of homomeric channels in their unitary conductance, kinetic behavior, subcellular localization, and response to activation of protein kinase C. In terms of processing, phosphorylated by protein kinase C. Phosphorylation of the C-terminal domain inhibits channel activity. As to expression, detected in brain, and at low levels in heart. Detected in brainstem, including auditory neurons such as the medial nucleus of the trapezoid body. Detected in the olfactory bulb, red nucleus, facial nucleus, pontine nucleus, oculomotor nucleus, substantia nigra, deep cerebellar nuclei, vestibular nucleus, and the thalamus. Detected in hippocampal CA1, CA2, and CA3 regions, the dentate gyrus, supraoptic nucleus, hypothalamus, dorsal root ganglion, and cortical layers II, III, and V. Detected in striatum cholinergic interneurons.

It localises to the cell membrane. The catalysed reaction is K(+)(in) = K(+)(out). Its activity is regulated as follows. Are normally in a closed state unless activated by an increase in intracellular Na(+) and Cl(-). Inhibited upon stimulation of G-protein coupled receptors, such as CHRM1 and GRM1. There is conflicting data about the effect of ATP on KNCT2 channels activity. Intracellular ATP was initially report to inhibit the channel activity. However, others studies conclude that KNCT2 channels are not inhibited by intracellular ATP. Its function is as follows. Sodium-activated and chloride-activated potassium channel. Produces rapidly activating outward rectifier K(+) currents. Contributes to regulate neuronal excitability. The chain is Potassium channel subfamily T member 2 (Kcnt2) from Rattus norvegicus (Rat).